Consider the following 299-residue polypeptide: ATP phosphoribosyltransferase (299 aa).

This sequence belongs to the ATP phosphoribosyltransferase family. Long subfamily. As to quaternary structure, equilibrium between an active dimeric form, an inactive hexameric form and higher aggregates. Interconversion between the various forms is largely reversible and is influenced by the natural substrates and inhibitors of the enzyme. The cofactor is Mg(2+).

The protein resides in the cytoplasm. It carries out the reaction 1-(5-phospho-beta-D-ribosyl)-ATP + diphosphate = 5-phospho-alpha-D-ribose 1-diphosphate + ATP. It participates in amino-acid biosynthesis; L-histidine biosynthesis; L-histidine from 5-phospho-alpha-D-ribose 1-diphosphate: step 1/9. Feedback inhibited by histidine. In terms of biological role, catalyzes the condensation of ATP and 5-phosphoribose 1-diphosphate to form N'-(5'-phosphoribosyl)-ATP (PR-ATP). Has a crucial role in the pathway because the rate of histidine biosynthesis seems to be controlled primarily by regulation of HisG enzymatic activity. The protein is ATP phosphoribosyltransferase of Salmonella choleraesuis (strain SC-B67).